The following is a 179-amino-acid chain: Large ribosomal subunit protein uL5 (179 aa).

The protein belongs to the universal ribosomal protein uL5 family. As to quaternary structure, part of the 50S ribosomal subunit; part of the 5S rRNA/L5/L18/L25 subcomplex. Contacts the 5S rRNA and the P site tRNA. Forms a bridge to the 30S subunit in the 70S ribosome.

Its function is as follows. This is one of the proteins that bind and probably mediate the attachment of the 5S RNA into the large ribosomal subunit, where it forms part of the central protuberance. In the 70S ribosome it contacts protein S13 of the 30S subunit (bridge B1b), connecting the 2 subunits; this bridge is implicated in subunit movement. Contacts the P site tRNA; the 5S rRNA and some of its associated proteins might help stabilize positioning of ribosome-bound tRNAs. The protein is Large ribosomal subunit protein uL5 of Bordetella petrii (strain ATCC BAA-461 / DSM 12804 / CCUG 43448).